Here is a 338-residue protein sequence, read N- to C-terminus: L-asparaginase 1 (338 aa).

Positions 4-329 constitute an Asparaginase/glutaminase domain; sequence KSIYVAYTGG…ETIRKAMSQN (326 aa). Thr14 acts as the O-isoaspartyl threonine intermediate in catalysis. Substrate-binding positions include 59 to 61 and 91 to 92; these read DSS and TD.

This sequence belongs to the asparaginase 1 family. Homotetramer.

It is found in the cytoplasm. The enzyme catalyses L-asparagine + H2O = L-aspartate + NH4(+). This chain is L-asparaginase 1 (ansA), found in Escherichia coli O157:H7.